We begin with the raw amino-acid sequence, 115 residues long: Histidine decarboxylase proenzyme (115 aa).

A Pyruvic acid (Ser) modification is found at Ser83.

In terms of assembly, the proenzyme is a hexamer of identical pi chains; each pi chain monomer is cleaved to form a small (or beta) chain and a large (or alpha) chain by non-hydrolytic self-catalysis. Pyruvate is required as a cofactor.

It carries out the reaction L-histidine + H(+) = histamine + CO2. This Lentilactobacillus buchneri (Lactobacillus buchneri) protein is Histidine decarboxylase proenzyme.